Consider the following 349-residue polypeptide: Histidinol-phosphate aminotransferase (349 aa).

Residues M1–T22 are disordered. Residue K207 is modified to N6-(pyridoxal phosphate)lysine.

Belongs to the class-II pyridoxal-phosphate-dependent aminotransferase family. Histidinol-phosphate aminotransferase subfamily. In terms of assembly, homodimer. The cofactor is pyridoxal 5'-phosphate.

The enzyme catalyses L-histidinol phosphate + 2-oxoglutarate = 3-(imidazol-4-yl)-2-oxopropyl phosphate + L-glutamate. It functions in the pathway amino-acid biosynthesis; L-histidine biosynthesis; L-histidine from 5-phospho-alpha-D-ribose 1-diphosphate: step 7/9. This Synechocystis sp. (strain ATCC 27184 / PCC 6803 / Kazusa) protein is Histidinol-phosphate aminotransferase (hisC).